The sequence spans 93 residues: Consomatin G1 (93 aa).

An N-terminal signal peptide occupies residues 1 to 22 (MQTAYWVMLMMMVCITAPLPEG). Residues 23–69 (GKPNSGIRGLVPNDLTPQHTLRSLISRRQTDVLLDATLLTTPAPEQR) constitute a propeptide that is removed on maturation. Cysteines 72 and 77 form a disulfide. The residue at position 74 (Trp-74) is a D-tryptophan. Positions 79 to 93 (PRPYPWRRRDLNGKR) are excised as a propeptide.

This sequence belongs to the conotoxin C superfamily. Consomatin family. Expressed by the venom duct.

It is found in the secreted. Functionally, potently activates human somatostatin receptors (SSTR) with a specific activation of SSTR2 (EC(50)=2.6 nM). This Conus geographus (Geography cone) protein is Consomatin G1.